A 525-amino-acid polypeptide reads, in one-letter code: Eukaryotic translation initiation factor 3 subunit L (525 aa).

Over residues 1–19 (MYTQADEYDGGDAGYEDDY) the composition is skewed to acidic residues. Positions 1 to 21 (MYTQADEYDGGDAGYEDDYSG) are disordered. One can recognise a PCI domain in the interval 296–502 (DAIRCFSSVL…IHIADTKVDR (207 aa)).

This sequence belongs to the eIF-3 subunit L family. Component of the eukaryotic translation initiation factor 3 (eIF-3) complex.

Its subcellular location is the cytoplasm. Functionally, component of the eukaryotic translation initiation factor 3 (eIF-3) complex, which is involved in protein synthesis of a specialized repertoire of mRNAs and, together with other initiation factors, stimulates binding of mRNA and methionyl-tRNAi to the 40S ribosome. The eIF-3 complex specifically targets and initiates translation of a subset of mRNAs involved in cell proliferation. The chain is Eukaryotic translation initiation factor 3 subunit L from Nematostella vectensis (Starlet sea anemone).